The sequence spans 101 residues: Conantokin-L (101 aa).

Residues 1–21 form the signal peptide; sequence MQLYTYLYLLVPLVTFHLILG. The propeptide occupies 22 to 80; the sequence is TGTLDHGGALTERRSTDAIALKPEPVLLQKSSARSTDDNGNDRLTQMKRILKKRGNKAR. 4-carboxyglutamate is present on residues glutamate 83, glutamate 84, glutamate 91, and glutamate 95. A divalent metal cation-binding residues include glutamate 91 and glutamate 95. At asparagine 99 the chain carries Asparagine amide.

The protein belongs to the conotoxin B superfamily. Ca(2+) is required as a cofactor. The cofactor is Mg(2+). In terms of tissue distribution, expressed by the venom duct.

The protein localises to the secreted. In terms of biological role, conantokins inhibit N-methyl-D-aspartate (NMDA) receptors. This toxin is far less potent as an anticonvulsant compound than conantokin-R. It induces sleep-like symptoms in mice. The sequence is that of Conantokin-L from Conus lynceus (Lynceus cone).